A 442-amino-acid polypeptide reads, in one-letter code: MSVEYYLSLYAKYNSKNLDVFRNMLQVIEPSGNYHILHAYCGIKGLDERFIEELLHRGYSPNETDDDGNYPLHIASKINNNRIVAMLLVHGADPNACDKHNKTPLYYLSGTDDEVIERINLLVQYGAKINNSVDEEGCGPLLACTDPSERVFKKIMSIGFEARIVDKFGKNHIHRHLMSDNPKASTISWMMKLGISPSKPDHDGNTPLHIVCSKTVKYVDIINLLLPSTDVNKQNKFGDSPLTLLIKTLSPAHLINKLISTSNVITDQTVNICIFYDRDDVLEIINDKGKQYDSTDFKMAVEVGSIRCVKYLLDNDIICEDAMYYAVLSEYETMVDYLLFNHFSVDSIVNGHTCMSECVRLNNPVILSKLMLHNPTSETMYITMKEIEKDKLDKSIIIPFIAYFVLMHPDFCKNCRYFTSYKRFVTDYVHEGVSYEVFDDYF.

ANK repeat units lie at residues 67-96, 100-131, 203-233, 237-267, 292-321, and 323-347; these read DGNYPLHIASKINNNRIVAMLLVHGADPNA, HNKTPLYYLSGTDDEVIERINLLVQYGAKINN, DGNTPLHIVCSKTVKYVDIINLLLPSTDVNK, FGDSPLTLLIKTLSPAHLINKLISTSNVITD, YDSTDFKMAVEVGSIRCVKYLLDNDIICED, and MYYAVLSEYETMVDYLLFNHFSVDS.

The protein belongs to the orthopoxvirus OPG037 family. As to quaternary structure, may interact with host caspase-9-Apaf-1 complex.

The protein localises to the host cytoplasm. Its function is as follows. Inhibits host apoptosis. Acts by associating with host apoptosome. The sequence is that of Inhibitor of Apoptosis OPG037 (OPG037) from Monkeypox virus.